The primary structure comprises 375 residues: Probable G-protein coupled receptor 27 (375 aa).

The Extracellular segment spans residues 1 to 23 (MANASEPGGSGGGEAAALGLKLA). Asparagine 3 is a glycosylation site (N-linked (GlcNAc...) asparagine). The chain crosses the membrane as a helical span at residues 24–44 (TLSLLLCVSLAGNVLFALLIV). Over 45–55 (RERSLHRAPYY) the chain is Cytoplasmic. Residues 56–76 (LLLDLCLADGLRALACLPAVM) traverse the membrane as a helical segment. The Extracellular segment spans residues 77-97 (LAARRAAAAAGAPPGALGCKL). An intrachain disulfide couples cysteine 95 to cysteine 171. Residues 98–118 (LAFLAALFCFHAAFLLLGVGV) form a helical membrane-spanning segment. At 119 to 139 (TRYLAIAHHRFYAERLAGWPC) the chain is on the cytoplasmic side. A helical transmembrane segment spans residues 140–160 (AAMLVCAAWALALAAAFPPVL). The Extracellular portion of the chain corresponds to 161–181 (DGGGDDEDAPCALEQRPDGAP). A helical transmembrane segment spans residues 182 to 202 (GALGFLLLLAVVVGATHLVYL). Residues 203–285 (RLLFFIHDRR…FKTEKRLCKM (83 aa)) lie on the Cytoplasmic side of the membrane. The chain crosses the membrane as a helical span at residues 286-306 (FYAVTLLFLLLWGPYVVASYL). Over 307 to 320 (RVLVRPGAVPQAYL) the chain is Extracellular. The chain crosses the membrane as a helical span at residues 321-341 (TASVWLTFAQAGINPVVCFLF). The Cytoplasmic portion of the chain corresponds to 342-375 (NRELRDCFRAQFPCCQSPRTTQATHPCDLKGIGL).

It belongs to the G-protein coupled receptor 1 family. In terms of tissue distribution, highly expressed as a 3.0 kb transcript in brain, ovary, testis, heart, prostate and peripheral Leukocytes. Lower levels in pancreas and small intestine. A 2.3 kb transcript was also found in peripheral Leukocytes. In brain regions, detected as a 3.0 kb transcript in all regions tested. Highest levels in the caudate nucleus, putamen, hippocampus and subthalamic nucleus. Lowest level in the cerebellum.

It localises to the cell membrane. Orphan receptor. Possible candidate for amine-like G-protein coupled receptor. This chain is Probable G-protein coupled receptor 27 (GPR27), found in Homo sapiens (Human).